A 271-amino-acid polypeptide reads, in one-letter code: Neurexophilin-1 (271 aa).

A signal peptide spans 1–21; that stretch reads MQAACWYVLLLLQPTVYLVTC. The II stretch occupies residues 22-97; the sequence is ANLTNGGKSE…WDWLRNSTDL (76 aa). Residues asparagine 23, asparagine 68, asparagine 93, asparagine 146, asparagine 156, and asparagine 162 are each glycosylated (N-linked (GlcNAc...) asparagine). An III region spans residues 98 to 176; sequence QEPRPRAKRR…LVPPTKIVEF (79 aa). Residues 177 to 185 are IV (linker domain); it reads DLAQQTVID. The tract at residues 186 to 271 is v (Cys-rich); it reads AKDSKSFNCR…HSDTPYFPSG (86 aa).

This sequence belongs to the neurexophilin family. May be proteolytically processed at the boundary between the N-terminal non-conserved and the central conserved domain in neuron-like cells. In terms of tissue distribution, highest level in brain.

The protein resides in the secreted. Functionally, may be signaling molecules that resemble neuropeptides. Ligand for alpha-neurexins. This is Neurexophilin-1 (Nxph1) from Rattus norvegicus (Rat).